A 413-amino-acid chain; its full sequence is Serine--tRNA ligase (413 aa).

221 to 223 provides a ligand contact to L-serine; it reads TAE. 252–254 is a binding site for ATP; sequence RRE. Residue E275 coordinates L-serine. 339-342 provides a ligand contact to ATP; the sequence is EVSS. L-serine is bound at residue S375.

It belongs to the class-II aminoacyl-tRNA synthetase family. Type-1 seryl-tRNA synthetase subfamily. Homodimer. The tRNA molecule binds across the dimer.

It localises to the cytoplasm. It catalyses the reaction tRNA(Ser) + L-serine + ATP = L-seryl-tRNA(Ser) + AMP + diphosphate + H(+). The enzyme catalyses tRNA(Sec) + L-serine + ATP = L-seryl-tRNA(Sec) + AMP + diphosphate + H(+). Its pathway is aminoacyl-tRNA biosynthesis; selenocysteinyl-tRNA(Sec) biosynthesis; L-seryl-tRNA(Sec) from L-serine and tRNA(Sec): step 1/1. Functionally, catalyzes the attachment of serine to tRNA(Ser). Is also able to aminoacylate tRNA(Sec) with serine, to form the misacylated tRNA L-seryl-tRNA(Sec), which will be further converted into selenocysteinyl-tRNA(Sec). The protein is Serine--tRNA ligase of Dehalococcoides mccartyi (strain ATCC BAA-2266 / KCTC 15142 / 195) (Dehalococcoides ethenogenes (strain 195)).